Here is a 221-residue protein sequence, read N- to C-terminus: GDP-perosamine N-acetyltransferase (221 aa).

Catalysis depends on His-139, which acts as the Proton acceptor.

It belongs to the transferase hexapeptide repeat family. Homotrimer.

It catalyses the reaction GDP-alpha-D-perosamine + acetyl-CoA = GDP-N-acetyl-alpha-D-perosamine + CoA + H(+). The protein operates within bacterial outer membrane biogenesis; LPS O-antigen biosynthesis. Functionally, catalyzes the transfer of an acetyl residue from acetyl-CoA onto GDP-perosamine to form GDP-N-acetyl-perosamine. The polypeptide is GDP-perosamine N-acetyltransferase (Escherichia coli O157:H7).